The primary structure comprises 927 residues: MNSVRAANRRPRRVSRPRPVQQQQQQPPQQPPPQPPQQQPPQQQPPPPPQQQQQQQPPPPPPPPPPLPQERNNVGERDDDVPADMVAEESGPGAQNSPYQLRRKTLLPKRTACPTKNSMEGASTSTTENFGHRAKRARVSGKSQDLSAAPAEQYLQEKLPDEVVLKIFSYLLEQDLCRAACVCKRFSELANDPILWKRLYMEVFEYTRPMMHPEPGKFYQINPEEYEHPNPWKESFQQLYKGAHVKPGFAEHFYSNPARYKGRENMLYYDTIEDALGGVQEAHFDGLIFVHSGIYTDEWIYIESPITMIGAAPGKVADKVIIENTRDSTFVFMEGSEDAYVGYMTIRFNPDDKSAQHHNAHHCLEITVNCSPIIDHCIIRSTCTVGSAVCVSGQGACPTIKHCNISDCENVGLYITDHAQGIYEDNEISNNALAGIWVKNHGNPIIRRNHIHHGRDVGVFTFDHGMGYFESCNIHRNRIAGFEVKAYANPTVVRCEIHHGQTGGIYVHEKGRGQFIENKIYANNFAGVWITSNSDPTIRGNSIFNGNQGGVYIFGDGRGLIEGNDIYGNALAGIQIRTNSCPIVRHNKIHDGQHGGIYVHEKGQGVIEENEVYSNTLAGVWVTTGSTPVLRRNRIHSGKQVGVYFYDNGHGVLEDNDIYNHMYSGVQIRTGSNPKIRRNKIWGGQNGGILVYNSGLGCIEDNEIFDNAMAGVWIKTDSNPTLRRNKIHDGRDGGICIFNGGRGLLEENDIFRNAQAGVLISTNSHPILRKNRIFDGFAAGIEITNHATATLEGNQIFNNRFGGLFLASGVNVTMKDNKIMNNQDAIEKAVSRGQCLYKISSYTSYPMHDFYRCHTCNTTDRNAICVNCIKKCHQGHDVEFIRHDRFFCDCGAGTLSNPCTLAGEPTHDTDTLYDSAPPIESNTLQHN.

Positions 1–132 (MNSVRAANRR…STSTTENFGH (132 aa)) are disordered. Over residues 7 to 16 (ANRRPRRVSR) the composition is skewed to basic residues. Low complexity predominate over residues 17–27 (PRPVQQQQQQP). The span at 28–68 (PQQPPPQPPQQQPPQQQPPPPPQQQQQQQPPPPPPPPPPLP) shows a compositional bias: pro residues. Positions 114 to 129 (PTKNSMEGASTSTTEN) are enriched in polar residues. One can recognise an F-box domain in the interval 153 to 199 (QYLQEKLPDEVVLKIFSYLLEQDLCRAACVCKRFSELANDPILWKRL). PbH1 repeat units follow at residues 395–417 (GACPTIKHCNISDCENVGLYITD), 418–440 (HAQGIYEDNEISNNALAGIWVKN), 441–463 (HGNPIIRRNHIHHGRDVGVFTFD), 464–486 (HGMGYFESCNIHRNRIAGFEVKA), 487–509 (YANPTVVRCEIHHGQTGGIYVHE), 510–532 (KGRGQFIENKIYANNFAGVWITS), 533–555 (NSDPTIRGNSIFNGNQGGVYIFG), 556–578 (DGRGLIEGNDIYGNALAGIQIRT), 579–601 (NSCPIVRHNKIHDGQHGGIYVHE), 602–624 (KGQGVIEENEVYSNTLAGVWVTT), 625–647 (GSTPVLRRNRIHSGKQVGVYFYD), 648–670 (NGHGVLEDNDIYNHMYSGVQIRT), 671–693 (GSNPKIRRNKIWGGQNGGILVYN), 694–716 (SGLGCIEDNEIFDNAMAGVWIKT), 717–739 (DSNPTLRRNKIHDGRDGGICIFN), 740–762 (GGRGLLEENDIFRNAQAGVLIST), 763–785 (NSHPILRKNRIFDGFAAGIEITN), 786–808 (HATATLEGNQIFNNRFGGLFLAS), and 809–830 (GVNVTMKDNKIMNNQDAIEKAV). Residues 833 to 904 (GQCLYKISSY…LSNPCTLAGE (72 aa)) form a UBR-type zinc finger.

In terms of assembly, component of the SCF(FBXO11) complex consisting of CUL1, RBX1, SKP1 and FBXO11. Interacts with CIITA. In terms of tissue distribution, isoform 5 is expressed in keratinocytes, fibroblasts and melanocytes.

The protein localises to the nucleus. Its subcellular location is the chromosome. It functions in the pathway protein modification; protein ubiquitination. Its function is as follows. Substrate recognition component of a SCF (SKP1-CUL1-F-box protein) E3 ubiquitin-protein ligase complex which mediates the ubiquitination and subsequent proteasomal degradation of target proteins, such as DTL/CDT2, BCL6, SNAI1 and PRDM1/BLIMP1. The SCF(FBXO11) complex mediates ubiquitination and degradation of BCL6, thereby playing a role in the germinal center B-cells terminal differentiation toward memory B-cells and plasma cells. The SCF(FBXO11) complex also mediates ubiquitination and degradation of DTL, an important step for the regulation of TGF-beta signaling, cell migration and the timing of the cell-cycle progression and exit. The SCF(FBXO11) complex also catalyzes ubiquitination and degradation of GSK3B-phosphorylated SNAI1. Binds to and neddylates phosphorylated p53/TP53, inhibiting its transcriptional activity. Plays a role in the regulatiom of erythropoiesis but not myelopoiesis or megakaryopoiesis. Mechanistically, activates erythroid genes by mediating the degradation of BAHD1, a heterochromatin-associated protein that recruits corepressors to H3K27me3 marks. Participates in macrophage cell death and inflammation in response to bacterial toxins by regulating the expression of complement 5a receptor 1/C5AR1 and IL-1beta. Acts as a critical regulator to determine the level of MHC-II by mediating the recognition of degron at the P/S/T domain of CIITA leading to its ubiquitination and subsequent degradation via the proteasome. Participates in the antiviral repsonse by initiating the activation of TBK1-IRF3-IFN-I axis. Mediates the 'Lys-63'-linked ubiquitination of TRAF3 to strengthen the interaction between TRAF3 and TBK1. This chain is F-box only protein 11, found in Homo sapiens (Human).